The primary structure comprises 422 residues: MYKFRIQGSDKPLSGEVTISGAKNAALPILFASLLAEEPVEVANVPKLRDVDTTMELLKRLGAEVSRNGSVHIDASGVNDFCAPYDLVKTMRASIWALGPLVARFGKGQVSLPGGCAIGARPVDLHIHGLEQLGATIKLEEGYVKAEVDGRLKGAHIVMDKVSVGATITVMCAATLAEGTTVLENAAREPEIVDTANFLNAIGAKVSGMGTDTITIEGVERLGGGYHEVVADRIETGTFLVAAAVSGGKIVCKNTKAHLLEAVLAKLEEAGADVQTGDDWISLDMTGRELKAVNIRTAPHPAFPTDMQAQFTLLNMMAKGSGIITETIFENRFMHIPELQRMGAHAEIEGNTAICGDTDGLSGAQVMATDLRASASLVIAGCIAKGETIVDRIYHIDRGYDKIEDKLTALGANIERVHSDDL.

23–24 (KN) contacts phosphoenolpyruvate. R92 lines the UDP-N-acetyl-alpha-D-glucosamine pocket. C116 functions as the Proton donor in the catalytic mechanism. 2-(S-cysteinyl)pyruvic acid O-phosphothioketal is present on C116. Residues 121-125 (RPVDL), 161-165 (KVSVG), D306, and I328 contribute to the UDP-N-acetyl-alpha-D-glucosamine site.

This sequence belongs to the EPSP synthase family. MurA subfamily.

The protein resides in the cytoplasm. The catalysed reaction is phosphoenolpyruvate + UDP-N-acetyl-alpha-D-glucosamine = UDP-N-acetyl-3-O-(1-carboxyvinyl)-alpha-D-glucosamine + phosphate. It functions in the pathway cell wall biogenesis; peptidoglycan biosynthesis. Functionally, cell wall formation. Adds enolpyruvyl to UDP-N-acetylglucosamine. In Aliivibrio fischeri (strain MJ11) (Vibrio fischeri), this protein is UDP-N-acetylglucosamine 1-carboxyvinyltransferase.